The primary structure comprises 283 residues: NFU1 iron-sulfur cluster scaffold homolog, mitochondrial (283 aa).

Residues 1-65 constitute a mitochondrion transit peptide; it reads MSKFLSQAAI…ELRMPVACRR (65 aa). Residues 182 to 250 are nifU; the sequence is IKELLDTRIR…IPEVESVEQV (69 aa). [4Fe-4S] cluster is bound by residues Cys219 and Cys222.

Belongs to the NifU family.

Its subcellular location is the mitochondrion. Functionally, molecular scaffold for [Fe-S] cluster assembly of mitochondrial iron-sulfur proteins. In Drosophila simulans (Fruit fly), this protein is NFU1 iron-sulfur cluster scaffold homolog, mitochondrial.